The sequence spans 98 residues: UPF0235 protein Mmc1_3654 (98 aa).

It belongs to the UPF0235 family.

The polypeptide is UPF0235 protein Mmc1_3654 (Magnetococcus marinus (strain ATCC BAA-1437 / JCM 17883 / MC-1)).